A 222-amino-acid chain; its full sequence is Thiamine-phosphate synthase (222 aa).

4-amino-2-methyl-5-(diphosphooxymethyl)pyrimidine contacts are provided by residues 40 to 44 and asparagine 81; that span reads QLRDK. Aspartate 82 and aspartate 101 together coordinate Mg(2+). A 4-amino-2-methyl-5-(diphosphooxymethyl)pyrimidine-binding site is contributed by serine 120. 146 to 148 is a 2-[(2R,5Z)-2-carboxy-4-methylthiazol-5(2H)-ylidene]ethyl phosphate binding site; it reads TPT. Lysine 149 provides a ligand contact to 4-amino-2-methyl-5-(diphosphooxymethyl)pyrimidine. Residue glycine 178 coordinates 2-[(2R,5Z)-2-carboxy-4-methylthiazol-5(2H)-ylidene]ethyl phosphate.

The protein belongs to the thiamine-phosphate synthase family. Requires Mg(2+) as cofactor.

The catalysed reaction is 2-[(2R,5Z)-2-carboxy-4-methylthiazol-5(2H)-ylidene]ethyl phosphate + 4-amino-2-methyl-5-(diphosphooxymethyl)pyrimidine + 2 H(+) = thiamine phosphate + CO2 + diphosphate. It catalyses the reaction 2-(2-carboxy-4-methylthiazol-5-yl)ethyl phosphate + 4-amino-2-methyl-5-(diphosphooxymethyl)pyrimidine + 2 H(+) = thiamine phosphate + CO2 + diphosphate. The enzyme catalyses 4-methyl-5-(2-phosphooxyethyl)-thiazole + 4-amino-2-methyl-5-(diphosphooxymethyl)pyrimidine + H(+) = thiamine phosphate + diphosphate. It participates in cofactor biosynthesis; thiamine diphosphate biosynthesis; thiamine phosphate from 4-amino-2-methyl-5-diphosphomethylpyrimidine and 4-methyl-5-(2-phosphoethyl)-thiazole: step 1/1. Its function is as follows. Condenses 4-methyl-5-(beta-hydroxyethyl)thiazole monophosphate (THZ-P) and 2-methyl-4-amino-5-hydroxymethyl pyrimidine pyrophosphate (HMP-PP) to form thiamine monophosphate (TMP). The sequence is that of Thiamine-phosphate synthase from Mycobacterium tuberculosis (strain ATCC 25177 / H37Ra).